A 149-amino-acid chain; its full sequence is MESTFIMIKPDGVQRGLIGEIISRFEKKGFYLKALKLVNVERSFAEKHYADLASKPFFQGLVDYIISGPVVAMVWEGKSVVTTGRKIIGATNPLASEPGTIRGDFAVDIGRNVIHGSDSIESANKEIALWFPEGPADWQSSQHPWIYEK.

ATP-binding residues include Lys9, Phe57, Arg85, Thr91, Arg102, and Asn112. Catalysis depends on His115, which acts as the Pros-phosphohistidine intermediate.

Belongs to the NDK family. As to quaternary structure, homohexamer. Can also form dodecamers. The cofactor is Mg(2+).

The protein resides in the nucleus. It carries out the reaction a 2'-deoxyribonucleoside 5'-diphosphate + ATP = a 2'-deoxyribonucleoside 5'-triphosphate + ADP. The catalysed reaction is a ribonucleoside 5'-diphosphate + ATP = a ribonucleoside 5'-triphosphate + ADP. Functionally, major role in the synthesis of nucleoside triphosphates other than ATP. The ATP gamma phosphate is transferred to the NDP beta phosphate via a ping-pong mechanism, using a phosphorylated active-site intermediate. Involved in transcription regulation. Has G-quadruplex (G4) DNA-binding activity, which is independent of its nucleotide-binding and kinase activity. Binds folded G4 with low nanomolar affinity and corresponding unfolded G-rich DNA more weakly. Stabilizes folded G4s regardless of whether they are prefolded or not. The sequence is that of Nucleoside diphosphate kinase 1 from Zea mays (Maize).